Here is a 937-residue protein sequence, read N- to C-terminus: Translation initiation factor IF-2 (937 aa).

Positions 47–352 (RAAFQTKATP…EMPQRKERPL (306 aa)) are disordered. Residues 52–68 (TKATPAASKPATPAAPK) show a composition bias toward low complexity. The span at 97-116 (QHSNNRPQANANRNGQASNG) shows a compositional bias: polar residues. Residues 117–153 (QNRTNNARPNNNSARPNNSRPNTNSRPNNNSQNRSTS) are compositionally biased toward low complexity. Residues 154 to 169 (ANHPMSLQEQISQANA) show a composition bias toward polar residues. Over residues 173 to 197 (RTQERIQQQREQREADEKKRREQAN) the composition is skewed to basic and acidic residues. A compositionally biased stretch (polar residues) spans 202-229 (TRNNASNNRPSNGKPTNGARPTTNSPRP). Over residues 240–269 (SSRPNNNNSARPNTTNNRPTNSRPATTPSR) the composition is skewed to low complexity. Polar residues predominate over residues 274–298 (QEMQQKMQANTVSASKPASNNTASK). Over residues 322–331 (FNKKRKKTRK) the composition is skewed to basic residues. Basic and acidic residues predominate over residues 339–352 (AAKKEMPQRKERPL). A tr-type G domain is found at 438-607 (SRPPVVTIMG…LLEADVLELK (170 aa)). The G1 stretch occupies residues 447 to 454 (GHVDHGKT). 447–454 (GHVDHGKT) serves as a coordination point for GTP. The segment at 472–476 (GITQH) is G2. The segment at 493–496 (DTPG) is G3. Residues 493–497 (DTPGH) and 547–550 (NKID) contribute to the GTP site. Residues 547–550 (NKID) form a G4 region. Residues 583–585 (SAK) are G5.

It belongs to the TRAFAC class translation factor GTPase superfamily. Classic translation factor GTPase family. IF-2 subfamily.

Its subcellular location is the cytoplasm. In terms of biological role, one of the essential components for the initiation of protein synthesis. Protects formylmethionyl-tRNA from spontaneous hydrolysis and promotes its binding to the 30S ribosomal subunits. Also involved in the hydrolysis of GTP during the formation of the 70S ribosomal complex. The polypeptide is Translation initiation factor IF-2 (Latilactobacillus sakei subsp. sakei (strain 23K) (Lactobacillus sakei subsp. sakei)).